The following is a 241-amino-acid chain: 1-(5-phosphoribosyl)-5-[(5-phosphoribosylamino)methylideneamino] imidazole-4-carboxamide isomerase (241 aa).

Asp7 serves as the catalytic Proton acceptor. The Proton donor role is filled by Asp129.

It belongs to the HisA/HisF family.

The protein localises to the cytoplasm. The enzyme catalyses 1-(5-phospho-beta-D-ribosyl)-5-[(5-phospho-beta-D-ribosylamino)methylideneamino]imidazole-4-carboxamide = 5-[(5-phospho-1-deoxy-D-ribulos-1-ylimino)methylamino]-1-(5-phospho-beta-D-ribosyl)imidazole-4-carboxamide. It participates in amino-acid biosynthesis; L-histidine biosynthesis; L-histidine from 5-phospho-alpha-D-ribose 1-diphosphate: step 4/9. The polypeptide is 1-(5-phosphoribosyl)-5-[(5-phosphoribosylamino)methylideneamino] imidazole-4-carboxamide isomerase (Buchnera aphidicola subsp. Baizongia pistaciae (strain Bp)).